Reading from the N-terminus, the 603-residue chain is Zinc finger protein 415 (603 aa).

The segment at 264-286 (YRYIECDKALNHGSHMTVRQVSH) adopts a C2H2-type 1; degenerate zinc-finger fold. 11 consecutive C2H2-type zinc fingers follow at residues 292-314 (YKCD…WRVH), 320-342 (YKCN…RRVH), 348-370 (YKCY…QKTH), 376-398 (YTCK…QVIH), 404-426 (YKCN…QRIH), 432-454 (YKCN…WRIH), 460-482 (YKCN…RRVH), 488-510 (YKCN…QVIH), 516-538 (YKCN…QVIH), 544-566 (YKCN…QIIH), and 572-594 (YKCS…QIIH).

As to expression, expressed in all tissues examined. Isoforms are differentially expressed. Isoform 3 and isoform 5 were highly expressed, isoform 4 moderately expressed, isoform 2 lower expression, the lowest expression level was seem with isoform 1.

Its subcellular location is the nucleus. It localises to the cytoplasm. Functionally, involved in transcriptional regulation. Transcriptional activity differed among the various isoforms. All isoforms except isoform 3 seem to suppresses the transcriptional activities of AP-1 and p53/TP53. This chain is Zinc finger protein 415 (ZNF415), found in Homo sapiens (Human).